A 476-amino-acid chain; its full sequence is tRNA(Ile)-lysidine synthase (476 aa).

Position 30–35 (30–35 (SGGPDS)) interacts with ATP.

The protein belongs to the tRNA(Ile)-lysidine synthase family.

Its subcellular location is the cytoplasm. It carries out the reaction cytidine(34) in tRNA(Ile2) + L-lysine + ATP = lysidine(34) in tRNA(Ile2) + AMP + diphosphate + H(+). Functionally, ligates lysine onto the cytidine present at position 34 of the AUA codon-specific tRNA(Ile) that contains the anticodon CAU, in an ATP-dependent manner. Cytidine is converted to lysidine, thus changing the amino acid specificity of the tRNA from methionine to isoleucine. The sequence is that of tRNA(Ile)-lysidine synthase from Bacillus cereus (strain ATCC 14579 / DSM 31 / CCUG 7414 / JCM 2152 / NBRC 15305 / NCIMB 9373 / NCTC 2599 / NRRL B-3711).